The primary structure comprises 122 residues: Ribosomal silencing factor RsfS (122 aa).

It belongs to the Iojap/RsfS family. Interacts with ribosomal protein uL14 (rplN).

The protein resides in the cytoplasm. Functions as a ribosomal silencing factor. Interacts with ribosomal protein uL14 (rplN), blocking formation of intersubunit bridge B8. Prevents association of the 30S and 50S ribosomal subunits and the formation of functional ribosomes, thus repressing translation. In Chromobacterium violaceum (strain ATCC 12472 / DSM 30191 / JCM 1249 / CCUG 213 / NBRC 12614 / NCIMB 9131 / NCTC 9757 / MK), this protein is Ribosomal silencing factor RsfS.